The following is a 102-amino-acid chain: A-type ATP synthase subunit F (102 aa).

Belongs to the V-ATPase F subunit family. As to quaternary structure, has multiple subunits with at least A(3), B(3), C, D, E, F, H, I and proteolipid K(x).

The protein localises to the cell membrane. Its function is as follows. Component of the A-type ATP synthase that produces ATP from ADP in the presence of a proton gradient across the membrane. This chain is A-type ATP synthase subunit F, found in Thermococcus sibiricus (strain DSM 12597 / MM 739).